A 250-amino-acid chain; its full sequence is NAD(P)H-hydrate epimerase (250 aa).

In terms of domain architecture, YjeF N-terminal spans 14-238 (AAALDVELMS…SIAEKYGIQK (225 aa)). 74-78 (NNGGD) contributes to the (6S)-NADPHX binding site. 2 residues coordinate K(+): Asn-75 and Asp-143. Residues 147 to 154 (GFSFHGTA), Tyr-159, and Asp-180 each bind (6S)-NADPHX. Ser-183 lines the K(+) pocket.

Belongs to the NnrE/AIBP family. K(+) serves as cofactor.

The enzyme catalyses (6R)-NADHX = (6S)-NADHX. It catalyses the reaction (6R)-NADPHX = (6S)-NADPHX. Functionally, catalyzes the epimerization of the S- and R-forms of NAD(P)HX, a damaged form of NAD(P)H that is a result of enzymatic or heat-dependent hydration. This is a prerequisite for the S-specific NAD(P)H-hydrate dehydratase to allow the repair of both epimers of NAD(P)HX. The protein is NAD(P)H-hydrate epimerase of Thalassiosira pseudonana (Marine diatom).